The chain runs to 125 residues: UPF0231 protein APL_0968 (125 aa).

It belongs to the UPF0231 family.

The chain is UPF0231 protein APL_0968 from Actinobacillus pleuropneumoniae serotype 5b (strain L20).